The sequence spans 391 residues: Processive diacylglycerol beta-glucosyltransferase (391 aa).

It belongs to the glycosyltransferase 28 family. UgtP subfamily.

The protein resides in the cell membrane. The enzyme catalyses a 1,2-diacyl-3-O-(beta-D-glucopyranosyl)-sn-glycerol + UDP-alpha-D-glucose = a 1,2-diacyl-3-O-(beta-D-Glc-(1-&gt;6)-beta-D-Glc)-sn-glycerol + UDP + H(+). It carries out the reaction a 1,2-diacyl-sn-glycerol + UDP-alpha-D-glucose = a 1,2-diacyl-3-O-(beta-D-glucopyranosyl)-sn-glycerol + UDP + H(+). The protein operates within glycolipid metabolism; diglucosyl-diacylglycerol biosynthesis. Its function is as follows. Processive glucosyltransferase involved in the biosynthesis of both the bilayer- and non-bilayer-forming membrane glucolipids. Is able to successively transfer two glucosyl residues to diacylglycerol (DAG), thereby catalyzing the formation of beta-monoglucosyl-DAG (3-O-(beta-D-glucopyranosyl)-1,2-diacyl-sn-glycerol) and beta-diglucosyl-DAG (3-O-(beta-D-glucopyranosyl-beta-(1-&gt;6)-D-glucopyranosyl)-1,2-diacyl-sn-glycerol). Beta-diglucosyl-DAG is the predominant glycolipid found in Bacillales and is also used as a membrane anchor for lipoteichoic acid (LTA). This is Processive diacylglycerol beta-glucosyltransferase from Staphylococcus carnosus (strain TM300).